The primary structure comprises 94 residues: Large ribosomal subunit protein eL36 (94 aa).

Basic residues predominate over residues 1–25; the sequence is MKNAYKKVRVRYPVKRPDVKRKQRG. Residues 1–30 form a disordered region; it reads MKNAYKKVRVRYPVKRPDVKRKQRGPRAET.

It belongs to the eukaryotic ribosomal protein eL36 family. In terms of assembly, component of the large ribosomal subunit.

Its subcellular location is the cytoplasm. This Encephalitozoon cuniculi (strain GB-M1) (Microsporidian parasite) protein is Large ribosomal subunit protein eL36 (RPL36).